The sequence spans 123 residues: Ragulator complex protein LAMTOR3-B (123 aa).

Belongs to the LAMTOR3 family. As to quaternary structure, part of the Ragulator complex composed of lamtor1, lamtor2, lamtor3, lamtor4 and lamtor5. The Ragulator complex interacts with slc38a9; the probable amino acid sensor. Component of the lysosomal folliculin complex (LFC).

The protein resides in the late endosome membrane. Its function is as follows. As part of the Ragulator complex it is involved in amino acid sensing and activation of mTORC1, a signaling complex promoting cell growth in response to growth factors, energy levels, and amino acids. Activated by amino acids through a mechanism involving the lysosomal V-ATPase, the Ragulator plays a dual role for the small GTPases Rag (RagA/RRAGA, RagB/RRAGB, RagC/RRAGC and/or RagD/RRAGD): it (1) acts as a guanine nucleotide exchange factor (GEF), activating the small GTPases Rag and (2) mediates recruitment of Rag GTPases to the lysosome membrane. Activated Ragulator and Rag GTPases function as a scaffold recruiting mTORC1 to lysosomes where it is in turn activated. This is Ragulator complex protein LAMTOR3-B (lamtor3-b) from Xenopus laevis (African clawed frog).